Reading from the N-terminus, the 308-residue chain is Elongation factor Ts (308 aa).

The interval 80–83 is involved in Mg(2+) ion dislocation from EF-Tu; that stretch reads TDFV.

It belongs to the EF-Ts family.

The protein resides in the cytoplasm. Associates with the EF-Tu.GDP complex and induces the exchange of GDP to GTP. It remains bound to the aminoacyl-tRNA.EF-Tu.GTP complex up to the GTP hydrolysis stage on the ribosome. The polypeptide is Elongation factor Ts (Sphingopyxis alaskensis (strain DSM 13593 / LMG 18877 / RB2256) (Sphingomonas alaskensis)).